The chain runs to 705 residues: Variediene synthase (705 aa).

The interval 9 to 331 is terpene cyclase; the sequence is LNSTLSSVVE…RCPRYHPWLC (323 aa). Asp100 contributes to the Mg(2+) binding site. Substrate contacts are provided by residues Asp100, 186–189, Asn230, 234–238, and 325–326; these read RIID, SFDIE, and RY. The DDXXD 1 signature appears at 100–104; it reads DNVVE. Residues 230 to 238 carry the NSE/DTE motif; it reads NDYFSFDIE. Positions 332–705 are prenyltransferase; that stretch reads KEAASLLHQD…VRLLIHRLKV (374 aa). The segment covering 349 to 366 has biased composition (basic and acidic residues); it reads GRKPQALEEYRSRSHSES. Residues 349–374 are disordered; that stretch reads GRKPQALEEYRSRSHSESDLSDASPT. Residues Lys424, Arg427, and His456 each contribute to the isopentenyl diphosphate site. Asp463 and Asp467 together coordinate Mg(2+). The DDXXD 2 motif lies at 463–467; sequence DDIED. Dimethylallyl diphosphate is bound at residue Arg472. Arg473 is a binding site for isopentenyl diphosphate. Dimethylallyl diphosphate-binding residues include Lys550, Thr551, Gln589, Asn596, Lys605, and Lys615.

It in the N-terminal section; belongs to the terpene synthase family. In the C-terminal section; belongs to the FPP/GGPP synthase family. Hexamer. Mg(2+) serves as cofactor.

The enzyme catalyses isopentenyl diphosphate + (2E,6E)-farnesyl diphosphate = (2E,6E,10E)-geranylgeranyl diphosphate + diphosphate. The catalysed reaction is isopentenyl diphosphate + (2E,6E,10E)-geranylgeranyl diphosphate = (2E,6E,10E,14E)-geranylfarnesyl diphosphate + diphosphate. It carries out the reaction (2E,6E,10E)-geranylgeranyl diphosphate = variediene + diphosphate. It catalyses the reaction (2E,6E,10E,14E)-geranylfarnesyl diphosphate = (R,2E)-alpha-cericerene + diphosphate. It participates in secondary metabolite biosynthesis; terpenoid biosynthesis. Its function is as follows. Bifunctional terpene synthase that converts dimethylallyl diphosphate (DMAPP) and isopentenyl diphosphate (IPP) into variediene as a single product. The C-terminal prenyltransferase (PT) domain of EvVS catalyzes formation of geranylgeranyl pyrophosphate (GGPP), whereas the N-terminal terpene cyclase (TC) domain catalyzes the cyclization of GGPP to variediene. The PT domain can also synthesize geranylfarnesyl pyrophosphate (GFPP) from the C5 isoprene units in vitro, while the TC domain is able to cyclize GFPP to the sesterterpene (2E)-alpha-cericerene. The sequence is that of Variediene synthase from Emericella variicolor (Aspergillus stellatus).